The primary structure comprises 388 residues: Processive diacylglycerol beta-glucosyltransferase (388 aa).

This sequence belongs to the glycosyltransferase 28 family. UgtP subfamily.

Its subcellular location is the cell membrane. It catalyses the reaction a 1,2-diacyl-3-O-(beta-D-glucopyranosyl)-sn-glycerol + UDP-alpha-D-glucose = a 1,2-diacyl-3-O-(beta-D-Glc-(1-&gt;6)-beta-D-Glc)-sn-glycerol + UDP + H(+). The enzyme catalyses a 1,2-diacyl-3-O-(beta-D-Glc-(1-&gt;6)-beta-D-Glc)-sn-glycerol + UDP-alpha-D-glucose = a 1,2-diacyl-3-O-(beta-D-Glc-(1-&gt;6)-beta-D-Glc-(1-&gt;6)-beta-D-Glc)-sn-glycerol + UDP + H(+). The catalysed reaction is a 1,2-diacyl-sn-glycerol + UDP-alpha-D-glucose = a 1,2-diacyl-3-O-(beta-D-glucopyranosyl)-sn-glycerol + UDP + H(+). The protein operates within glycolipid metabolism; diglucosyl-diacylglycerol biosynthesis. Functionally, processive glucosyltransferase involved in the biosynthesis of both the bilayer- and non-bilayer-forming membrane glucolipids. Is able to successively transfer up to three glucosyl residues to diacylglycerol (DAG), thereby catalyzing the formation of beta-monoglucosyl-DAG (3-O-(beta-D-glucopyranosyl)-1,2-diacyl-sn-glycerol), beta-diglucosyl-DAG (3-O-(beta-D-glucopyranosyl-beta-(1-&gt;6)-D-glucopyranosyl)-1,2-diacyl-sn-glycerol) and beta-triglucosyl-DAG (3-O-(beta-D-glucopyranosyl-beta-(1-&gt;6)-D-glucopyranosyl-beta-(1-&gt;6)-D-glucopyranosyl)-1,2-diacyl-sn-glycerol). Beta-diglucosyl-DAG is the predominant glycolipid found in Bacillales and is also used as a membrane anchor for lipoteichoic acid (LTA). This chain is Processive diacylglycerol beta-glucosyltransferase, found in Bacillus anthracis (strain A0248).